A 595-amino-acid chain; its full sequence is DNA primase (595 aa).

Residues 38 to 62 (CPFHQEKTPSFTVSDSKRFFYCFGC) form a CHC2-type zinc finger. One can recognise a Toprim domain in the interval 250–332 (NHSILVEGYF…EKKISFIRLP (83 aa)). Mg(2+) is bound by residues Glu256, Asp300, and Asp302.

It belongs to the DnaG primase family. As to quaternary structure, monomer. Interacts with DnaB. Zn(2+) is required as a cofactor. The cofactor is Mg(2+).

The enzyme catalyses ssDNA + n NTP = ssDNA/pppN(pN)n-1 hybrid + (n-1) diphosphate.. Functionally, RNA polymerase that catalyzes the synthesis of short RNA molecules used as primers for DNA polymerase during DNA replication. In Rickettsia felis (strain ATCC VR-1525 / URRWXCal2) (Rickettsia azadi), this protein is DNA primase.